We begin with the raw amino-acid sequence, 555 residues long: Alpha-copaene synthase (555 aa).

Positions 312, 316, 452, 456, and 460 each coordinate Mg(2+). The short motif at 312 to 316 (DDTYD) is the DDXXD motif element.

This sequence belongs to the terpene synthase family. Mg(2+) is required as a cofactor. Mainly expressed in sunflower trichomes.

It catalyses the reaction (2E,6E)-farnesyl diphosphate = alpha-copaene + diphosphate. It carries out the reaction (2E,6E)-farnesyl diphosphate = alpha-muurolene + diphosphate. The enzyme catalyses (2E,6E)-farnesyl diphosphate = alpha-humulene + diphosphate. The protein operates within secondary metabolite biosynthesis; terpenoid biosynthesis. In terms of biological role, involved in the biosynthesis of germacrene-derived sesquiterpene lactones. Catalyzes the cyclization of farnesyl diphosphate to alpha-copaene, delta-cadinene, alpha-muurolene, beta-caryophyllene and alpha-humulene. The polypeptide is Alpha-copaene synthase (CS) (Helianthus annuus (Common sunflower)).